A 278-amino-acid chain; its full sequence is Trans-2,3-dihydro-3-hydroxyanthranilate isomerase (278 aa).

Residue E45 is part of the active site.

This sequence belongs to the PhzF family.

The catalysed reaction is (5S,6S)-6-amino-5-hydroxycyclohexa-1,3-diene-1-carboxyate = (1R,6S)-6-amino-5-oxocyclohex-2-ene-1-carboxylate. Its pathway is secondary metabolite biosynthesis; pyocyanine biosynthesis. Isomerase that catalyzes the condensation of two molecules of trans-2,3-dihydro-3-hydroxyanthranilic acid (DHHA) into the phenazine ring system. The final product is not yet known. The protein is Trans-2,3-dihydro-3-hydroxyanthranilate isomerase (phzF1) of Pseudomonas aeruginosa (strain ATCC 15692 / DSM 22644 / CIP 104116 / JCM 14847 / LMG 12228 / 1C / PRS 101 / PAO1).